Reading from the N-terminus, the 460-residue chain is Chromosomal replication initiator protein DnaA (460 aa).

The interval 1 to 83 is domain I, interacts with DnaA modulators; the sequence is MENIWLEAQT…EFHVADEKPE (83 aa). A compositionally biased stretch (basic and acidic residues) spans 78-121; the sequence is ADEKPEAAPEEKPEKEGKPAREKEKDKDKEKEKDREKEKDKKEL. The disordered stretch occupies residues 78–122; that stretch reads ADEKPEAAPEEKPEKEGKPAREKEKDKDKEKEKDREKEKDKKELV. The tract at residues 83 to 123 is domain II; that stretch reads EAAPEEKPEKEGKPAREKEKDKDKEKEKDREKEKDKKELVP. The segment at 124–340 is domain III, AAA+ region; it reads NLNPKYTFES…GMLIRLEAFA (217 aa). Residues Gly-168, Gly-170, Lys-171, and Thr-172 each contribute to the ATP site. Positions 341–460 are domain IV, binds dsDNA; it reads SLTGQEITLS…VEDIRKKLFT (120 aa).

Belongs to the DnaA family. Oligomerizes as a right-handed, spiral filament on DNA at oriC.

The protein localises to the cytoplasm. In terms of biological role, plays an essential role in the initiation and regulation of chromosomal replication. ATP-DnaA binds to the origin of replication (oriC) to initiate formation of the DNA replication initiation complex once per cell cycle. Binds the DnaA box (a 9 base pair repeat at the origin) and separates the double-stranded (ds)DNA. Forms a right-handed helical filament on oriC DNA; dsDNA binds to the exterior of the filament while single-stranded (ss)DNA is stabiized in the filament's interior. The ATP-DnaA-oriC complex binds and stabilizes one strand of the AT-rich DNA unwinding element (DUE), permitting loading of DNA polymerase. After initiation quickly degrades to an ADP-DnaA complex that is not apt for DNA replication. Binds acidic phospholipids. The chain is Chromosomal replication initiator protein DnaA from Geobacter sp. (strain M21).